Reading from the N-terminus, the 207-residue chain is UPF0319 protein VV2327 (207 aa).

The signal sequence occupies residues 1-18 (MLRVLGLAGMLMSFNIHA).

This sequence belongs to the UPF0319 family.

This Vibrio vulnificus (strain YJ016) protein is UPF0319 protein VV2327.